We begin with the raw amino-acid sequence, 219 residues long: Ribonuclease HII (219 aa).

In terms of domain architecture, RNase H type-2 spans R30–S219. A divalent metal cation contacts are provided by D36, E37, and D128.

It belongs to the RNase HII family. It depends on Mn(2+) as a cofactor. The cofactor is Mg(2+).

The protein resides in the cytoplasm. The catalysed reaction is Endonucleolytic cleavage to 5'-phosphomonoester.. In terms of biological role, endonuclease that specifically degrades the RNA of RNA-DNA hybrids. The sequence is that of Ribonuclease HII from Pelobacter propionicus (strain DSM 2379 / NBRC 103807 / OttBd1).